Reading from the N-terminus, the 401-residue chain is Imidazolonepropionase (401 aa).

Residues H70 and H72 each coordinate Fe(3+). Residues H70 and H72 each coordinate Zn(2+). Positions 79, 142, and 175 each coordinate 4-imidazolone-5-propanoate. N-formimidoyl-L-glutamate is bound at residue Y142. H240 serves as a coordination point for Fe(3+). H240 provides a ligand contact to Zn(2+). Residue Q243 coordinates 4-imidazolone-5-propanoate. Position 315 (D315) interacts with Fe(3+). D315 is a binding site for Zn(2+). N-formimidoyl-L-glutamate contacts are provided by N317 and G319. S320 lines the 4-imidazolone-5-propanoate pocket.

It belongs to the metallo-dependent hydrolases superfamily. HutI family. The cofactor is Zn(2+). Requires Fe(3+) as cofactor.

The protein resides in the cytoplasm. It carries out the reaction 4-imidazolone-5-propanoate + H2O = N-formimidoyl-L-glutamate. Its pathway is amino-acid degradation; L-histidine degradation into L-glutamate; N-formimidoyl-L-glutamate from L-histidine: step 3/3. Its function is as follows. Catalyzes the hydrolytic cleavage of the carbon-nitrogen bond in imidazolone-5-propanoate to yield N-formimidoyl-L-glutamate. It is the third step in the universal histidine degradation pathway. The polypeptide is Imidazolonepropionase (Ruegeria pomeroyi (strain ATCC 700808 / DSM 15171 / DSS-3) (Silicibacter pomeroyi)).